The chain runs to 248 residues: MDFSGKNVWVTGAGKGIGYATALAFVEAGAKVTGFDQAFTQEQYPFATEVMDVADAAQVAQVCQRLLAETERLDALVNAAGILRMGATDQLSKEDWQQTFAVNVGGAFNLFQQTMNQFRRQRGGAIVTVASDAAHTPRIGMSAYGASKAALKSLALSVGLELAGSGVRCNVVSPGSTDTDMQRTLWVSDDAEEQRIRGFGEQFKLGIPLGKIARPQEIANTILFLASDLASHITLQDIVVDGGSTLGA.

NAD(+) is bound at residue 9 to 33 (WVTGAGKGIGYATALAFVEAGAKVT). S131 contributes to the substrate binding site. Residue Y144 is the Proton acceptor of the active site.

This sequence belongs to the short-chain dehydrogenases/reductases (SDR) family. Homotetramer; dimer of dimers. EntA and EntE interact together.

The enzyme catalyses (2S,3S)-2,3-dihydroxy-2,3-dihydrobenzoate + NAD(+) = 2,3-dihydroxybenzoate + NADH + H(+). Its pathway is siderophore biosynthesis; enterobactin biosynthesis. Inhibited by cis-2-hydroxy-3-cyclohexen-1-carboxylate, cis-2-hydroxycyclohexane-1-carboxylate and trans-2-hydroxycyclohexane-1-carboxylate. In terms of biological role, involved in the biosynthesis of the siderophore enterobactin (enterochelin), which is a macrocyclic trimeric lactone of N-(2,3-dihydroxybenzoyl)-serine. Catalyzes the reversible NAD-dependent oxidation of the C3-hydroxyl group of 2,3-dihydro-2,3-dihydroxybenzoate (2,3-diDHB), producing the transient intermediate 2-hydroxy-3-oxo-4,6-cyclohexadiene-1-carboxylate, which undergoes rapid aromatization to the final product, 2,3-dihydroxybenzoate (2,3-DHB). Only the compounds with a C3-hydroxyl group such as methyl 2,3-dihydro-2,3-dihydroxybenzoate, methyl-3-hydroxy-1,4-cyclohexadiene-1-carboxylate, trans-3-hydroxy-2-cyclohexene-1-carboxylate, cis-3-hydroxy-4-cyclohexene-1-carboxylate, cis-3-hydroxycyclohexane-1-carboxylic acid are oxidized to the corresponding ketone products. The stereospecificity of the C3 allylic alcohol group oxidation is 3R in a 1R,3R dihydro substrate. It can also increase the DHB-AMP ligase activity of EntE by interaction EntE. The sequence is that of 2,3-dihydro-2,3-dihydroxybenzoate dehydrogenase from Escherichia coli (strain K12).